A 229-amino-acid chain; its full sequence is Putative N-acetylmannosamine-6-phosphate 2-epimerase (229 aa).

It belongs to the NanE family.

It carries out the reaction an N-acyl-D-glucosamine 6-phosphate = an N-acyl-D-mannosamine 6-phosphate. It functions in the pathway amino-sugar metabolism; N-acetylneuraminate degradation; D-fructose 6-phosphate from N-acetylneuraminate: step 3/5. Its function is as follows. Converts N-acetylmannosamine-6-phosphate (ManNAc-6-P) to N-acetylglucosamine-6-phosphate (GlcNAc-6-P). This Shigella sonnei (strain Ss046) protein is Putative N-acetylmannosamine-6-phosphate 2-epimerase.